The primary structure comprises 309 residues: MKQMNKLITGVVTLATVVTLSACQSSHNNTKLVSMKGDTITVSDFYNETKNTELAQKAMLSLVISRVFETQYANKVSDKEVEKAYKQTADQYGTSFKTVLAQSGLTPETYKKQIRLTKLVEYAVKEQAKNETISKKDYRQAYDAYTPTMTAEIMQFEKEEDAKAALEAVKAEGADFAAIAKEKTIAADKKTTYTFDSGETTLPAEVVRAASGLKEGNRSEIITALDPATSKRTYHIIKVTKKATKKADWKAYQKRLKDIIVTGKLKDPDFQNKVIAKALDKANVKIKDKAFANILAQFAKPNQKQPAQK.

The signal sequence occupies residues 1-22 (MKQMNKLITGVVTLATVVTLSA). The N-palmitoyl cysteine moiety is linked to residue Cys23. The S-diacylglycerol cysteine moiety is linked to residue Cys23. The PpiC domain occupies 146 to 241 (TPTMTAEIMQ…RTYHIIKVTK (96 aa)).

Belongs to the PrsA family.

The protein localises to the cell membrane. It carries out the reaction [protein]-peptidylproline (omega=180) = [protein]-peptidylproline (omega=0). In terms of biological role, plays a major role in protein secretion by helping the post-translocational extracellular folding of several secreted proteins. In Streptococcus pyogenes serotype M3 (strain ATCC BAA-595 / MGAS315), this protein is Foldase protein PrsA 2 (prsA2).